A 1092-amino-acid chain; its full sequence is SUMO-specific isopeptidase USPL1 (1092 aa).

Disordered regions lie at residues 145 to 168 (VYDE…TADS) and 185 to 207 (TKDP…EGCT). 2 stretches are compositionally biased toward polar residues: residues 148 to 163 (ETSS…QNPI) and 197 to 206 (GRPSPQNEGC). The region spanning 227-500 (VQWKNAYALC…EIHIVIWERK (274 aa)) is the USP domain. The active-site Nucleophile is the cysteine 236. The interval 236 to 495 (CWLDCILSAL…EVPASEIHIV (260 aa)) is SUMO-binding. Histidine 456 (proton acceptor) is an active-site residue. Disordered stretches follow at residues 713–749 (LKPE…SLKE), 797–859 (GGFK…STSC), and 904–930 (AALM…GSPN). Polar residues predominate over residues 732–748 (ADSQTTTSKSLQNQSLK). Positions 810-819 (HVSKKARKSA) are enriched in basic residues. Pro residues predominate over residues 821 to 832 (KPPPISKPPAGP). Serine 909 is subject to Phosphoserine.

Belongs to the peptidase C19 family. In terms of assembly, interacts with ELL.

It localises to the nucleus. The protein localises to the cajal body. SUMO-specific isopeptidase involved in protein desumoylation. Specifically binds SUMO proteins with a higher affinity for SUMO2 and SUMO3 which it cleaves more efficiently. Also able to process full-length SUMO proteins to their mature forms. Plays a key role in RNA polymerase-II-mediated snRNA transcription in the Cajal bodies. Is a component of complexes that can bind to U snRNA genes. The chain is SUMO-specific isopeptidase USPL1 (USPL1) from Homo sapiens (Human).